A 179-amino-acid polypeptide reads, in one-letter code: Cell division protein ZapC (179 aa).

The protein belongs to the ZapC family. In terms of assembly, interacts directly with FtsZ.

The protein localises to the cytoplasm. Its function is as follows. Contributes to the efficiency of the cell division process by stabilizing the polymeric form of the cell division protein FtsZ. Acts by promoting interactions between FtsZ protofilaments and suppressing the GTPase activity of FtsZ. In Photobacterium profundum (strain SS9), this protein is Cell division protein ZapC.